A 147-amino-acid chain; its full sequence is Large ribosomal subunit protein uL15 (147 aa).

The disordered stretch occupies residues 21–49 (RVGRGEGSKGKTAGRGTKGTKARAPVRPG).

This sequence belongs to the universal ribosomal protein uL15 family. As to quaternary structure, part of the 50S ribosomal subunit.

Its function is as follows. Binds to the 23S rRNA. This Tropheryma whipplei (strain TW08/27) (Whipple's bacillus) protein is Large ribosomal subunit protein uL15.